The following is a 311-amino-acid chain: Dehydrogenase/reductase SDR family member 7C (311 aa).

The N-terminal stretch at 1–18 (MGVTAVLMLPLLLLGISG) is a signal peptide. Residues S47, L49, Y191, K195, and S226 each contribute to the NAD(+) site. Y191 acts as the Proton acceptor in catalysis.

This sequence belongs to the short-chain dehydrogenases/reductases (SDR) family.

It is found in the sarcoplasmic reticulum membrane. It carries out the reaction all-trans-retinol + NAD(+) = all-trans-retinal + NADH + H(+). Functionally, NADH-dependent oxidoreductase which catalyzes the oxidation of all-trans-retinol to all-trans-retinal. Plays a role in the regulation of cardiac and skeletal muscle metabolic functions. Maintains Ca(2+) intracellular homeostasis by repressing Ca(2+) release from the sarcoplasmic reticulum (SR) in myotubes, possibly through local alternations in NAD/NADH or retinol/retinal. Also plays a role in Ca(2+) homeostasis by controlling Ca(2+) overload in the cytosol and the SR in myotubes. Involved in glucose uptake into skeletal muscles and muscle performance by activating PI3K and mTORC2-mediated AKT1 phosphorylation signaling pathways, possibly through the action of its downstream catalytic product all-trans-retinoic acid. The protein is Dehydrogenase/reductase SDR family member 7C (DHRS7C) of Bos taurus (Bovine).